We begin with the raw amino-acid sequence, 614 residues long: Subtilin transport ATP-binding protein SpaT (614 aa).

The next 5 membrane-spanning stretches (helical) occupy residues 34 to 54 (FLKL…SLYI), 69 to 89 (VSIV…SELI), 147 to 167 (IIQA…SIAF), 175 to 195 (VSLL…KIGQ), and 267 to 287 (IAVQ…AFAG). The ABC transmembrane type-1 domain maps to 34-320 (FLKLIRFSII…IMTSIYSIYN (287 aa)). An ABC transporter domain is found at 353–593 (VVFQNVSFIY…CPLYKKMDES (241 aa)). ATP is bound at residue 387-394 (GPNGSGKK).

The protein belongs to the ABC transporter superfamily.

The protein resides in the cell membrane. In terms of biological role, probably implicated in the export process of the lantibiotic subtilin. The protein is Subtilin transport ATP-binding protein SpaT (spaT) of Bacillus subtilis.